The sequence spans 130 residues: Small ribosomal subunit protein uS11 (130 aa).

This sequence belongs to the universal ribosomal protein uS11 family. In terms of assembly, part of the 30S ribosomal subunit. Interacts with proteins S7 and S18. Binds to IF-3.

Functionally, located on the platform of the 30S subunit, it bridges several disparate RNA helices of the 16S rRNA. Forms part of the Shine-Dalgarno cleft in the 70S ribosome. The polypeptide is Small ribosomal subunit protein uS11 (Parasynechococcus marenigrum (strain WH8102)).